The following is a 95-amino-acid chain: Small ribosomal subunit protein bS6 (95 aa).

The protein belongs to the bacterial ribosomal protein bS6 family.

In terms of biological role, binds together with bS18 to 16S ribosomal RNA. This chain is Small ribosomal subunit protein bS6, found in Exiguobacterium sp. (strain ATCC BAA-1283 / AT1b).